Reading from the N-terminus, the 89-residue chain is Small cysteine-rich protein 1 (89 aa).

An N-terminal signal peptide occupies residues 1–20 (MDVRFRLCLFLVILVIVANA). Positions 21–27 (NVIKEPE) are excised as a propeptide.

It belongs to the Cnidaria small cysteine-rich protein (SCRiP) family. gamma subfamily. In terms of processing, contains 4 disulfide bonds.

The protein localises to the secreted. It localises to the nematocyst. Its function is as follows. Induces neurotoxic symptoms on zebrafish. Has also been claimed to be implied in calcification, but tests on homolog proteins suggest that proteins of this family have a neurotoxic function and not a calcification function. This Acropora millepora (Staghorn coral) protein is Small cysteine-rich protein 1.